Reading from the N-terminus, the 234-residue chain is Leucyl/phenylalanyl-tRNA--protein transferase (234 aa).

It belongs to the L/F-transferase family.

The protein resides in the cytoplasm. It carries out the reaction N-terminal L-lysyl-[protein] + L-leucyl-tRNA(Leu) = N-terminal L-leucyl-L-lysyl-[protein] + tRNA(Leu) + H(+). The enzyme catalyses N-terminal L-arginyl-[protein] + L-leucyl-tRNA(Leu) = N-terminal L-leucyl-L-arginyl-[protein] + tRNA(Leu) + H(+). The catalysed reaction is L-phenylalanyl-tRNA(Phe) + an N-terminal L-alpha-aminoacyl-[protein] = an N-terminal L-phenylalanyl-L-alpha-aminoacyl-[protein] + tRNA(Phe). Functions in the N-end rule pathway of protein degradation where it conjugates Leu, Phe and, less efficiently, Met from aminoacyl-tRNAs to the N-termini of proteins containing an N-terminal arginine or lysine. The protein is Leucyl/phenylalanyl-tRNA--protein transferase of Escherichia fergusonii (strain ATCC 35469 / DSM 13698 / CCUG 18766 / IAM 14443 / JCM 21226 / LMG 7866 / NBRC 102419 / NCTC 12128 / CDC 0568-73).